Reading from the N-terminus, the 156-residue chain is Ribonuclease pancreatic (156 aa).

The first 28 residues, 1 to 28 (MALEKSLALLPLLVLVLLVLGWVQPSLG), serve as a signal peptide directing secretion. 2 residues coordinate substrate: Lys35 and Arg38. His40 serves as the catalytic Proton acceptor. Disulfide bonds link Cys54–Cys112, Cys68–Cys123, Cys86–Cys138, and Cys93–Cys100. N-linked (GlcNAc...) asparagine glycosylation is present at Asn62. Residue 69–73 (KPVNT) coordinates substrate. N-linked (GlcNAc...) asparagine glycosylation is present at Asn90. Substrate-binding residues include Lys94 and Arg113. The active-site Proton donor is the His147.

This sequence belongs to the pancreatic ribonuclease family. Monomer. Interacts with and forms tight 1:1 complexes with RNH1. Dimerization of two such complexes may occur. Interaction with RNH1 inhibits this protein.

It localises to the secreted. It carries out the reaction an [RNA] containing cytidine + H2O = an [RNA]-3'-cytidine-3'-phosphate + a 5'-hydroxy-ribonucleotide-3'-[RNA].. The catalysed reaction is an [RNA] containing uridine + H2O = an [RNA]-3'-uridine-3'-phosphate + a 5'-hydroxy-ribonucleotide-3'-[RNA].. Endonuclease that catalyzes the cleavage of RNA on the 3' side of pyrimidine nucleotides. Acts on single-stranded and double-stranded RNA. In Lagothrix lagotricha (Brown woolly monkey), this protein is Ribonuclease pancreatic (RNASE1).